The chain runs to 911 residues: Probable 2-oxoadipate dehydrogenase complex component E1 homolog (911 aa).

The protein belongs to the alpha-ketoglutarate dehydrogenase family. Thiamine diphosphate serves as cofactor.

It is found in the mitochondrion. The catalysed reaction is N(6)-[(R)-lipoyl]-L-lysyl-[protein] + 2-oxoadipate + H(+) = N(6)-[(R)-S(8)-glutaryldihydrolipoyl]-L-lysyl-[protein] + CO2. Its function is as follows. 2-oxoadipate dehydrogenase (E1a) component of the 2-oxoadipate dehydrogenase complex (OADHC). Participates in the first step, rate limiting for the overall conversion of 2-oxoadipate (alpha-ketoadipate) to glutaryl-CoA and CO(2) catalyzed by the whole OADHC. Catalyzes the irreversible decarboxylation of 2-oxoadipate via the thiamine diphosphate (ThDP) cofactor and subsequent transfer of the decarboxylated acyl intermediate on an oxidized dihydrolipoyl group that is covalently amidated to the E2 enzyme (dihydrolipoyllysine-residue succinyltransferase or DLST). This chain is Probable 2-oxoadipate dehydrogenase complex component E1 homolog, found in Caenorhabditis elegans.